The primary structure comprises 418 residues: Hydroxysteroid dehydrogenase-like protein 2 (418 aa).

NADP(+)-binding positions include 17 to 23 (GASRGIG), Lys42, and Asp74. Lys42 is subject to N6-(2-hydroxyisobutyryl)lysine. Lys116 is subject to N6-acetyllysine. The active-site Proton acceptor is Tyr168. Lys172 provides a ligand contact to NADP(+). The SCP2 domain maps to 306–415 (RSGAVEETFR…KLEKLMNQMN (110 aa)). An N6-succinyllysine modification is found at Lys318.

This sequence belongs to the short-chain dehydrogenases/reductases (SDR) family. In terms of tissue distribution, ubiquitous.

It localises to the peroxisome. The protein localises to the mitochondrion. Its function is as follows. Has apparently no steroid dehydrogenase activity. Controls bile acid (BA) and lipid metabolism in response to nutritional cues. The protein is Hydroxysteroid dehydrogenase-like protein 2 of Homo sapiens (Human).